The sequence spans 463 residues: Lipase 6 (463 aa).

The first 16 residues, 1–16, serve as a signal peptide directing secretion; the sequence is MRDLILFLSLLHTIFA. Cysteine 112 and cysteine 285 are disulfide-bonded. Serine 196 serves as the catalytic Charge relay system. Asparagine 231 carries N-linked (GlcNAc...) asparagine glycosylation. Catalysis depends on charge relay system residues aspartate 348 and histidine 381. Cysteine 364 and cysteine 409 form a disulfide bridge. N-linked (GlcNAc...) asparagine glycosylation occurs at asparagine 422.

This sequence belongs to the AB hydrolase superfamily. Lipase family. Class Lip subfamily.

It is found in the secreted. It catalyses the reaction a triacylglycerol + H2O = a diacylglycerol + a fatty acid + H(+). Secreted lipase that is able to hydrolyze both the neutral triacylglycerols and the monopalmitate ester Tween 40, allowing the use of hydrolyzed products as carbon sources. Has broad lipolytic activity, which may be important for colonization and subsequent infection, therefore contributing to the persistence and virulence in human tissue. This chain is Lipase 6, found in Candida albicans (strain SC5314 / ATCC MYA-2876) (Yeast).